The chain runs to 39 residues: MDRNSNPNRQPVELNRTSLYLGLLLVAVLGILFSSYFFN.

Residues 16-37 (RTSLYLGLLLVAVLGILFSSYF) form a helical membrane-spanning segment.

This sequence belongs to the PsbL family. In terms of assembly, PSII is composed of 1 copy each of membrane proteins PsbA, PsbB, PsbC, PsbD, PsbE, PsbF, PsbH, PsbI, PsbJ, PsbK, PsbL, PsbM, PsbT, PsbX, PsbY, PsbZ, Psb30/Ycf12, peripheral proteins PsbO, CyanoQ (PsbQ), PsbU, PsbV and a large number of cofactors. It forms dimeric complexes.

The protein resides in the cellular thylakoid membrane. Its function is as follows. One of the components of the core complex of photosystem II (PSII). PSII is a light-driven water:plastoquinone oxidoreductase that uses light energy to abstract electrons from H(2)O, generating O(2) and a proton gradient subsequently used for ATP formation. It consists of a core antenna complex that captures photons, and an electron transfer chain that converts photonic excitation into a charge separation. This subunit is found at the monomer-monomer interface and is required for correct PSII assembly and/or dimerization. Required for PSII activity, at least in part due to its effects on PSII assembly. May make specific contact(s) with lipids. The polypeptide is Photosystem II reaction center protein L (Synechocystis sp. (strain ATCC 27184 / PCC 6803 / Kazusa)).